A 528-amino-acid chain; its full sequence is Ribonuclease Y (528 aa).

Residues 15–35 (SLLVFALICGSIIGYFLYSFF) traverse the membrane as a helical segment. The KH domain occupies 217-277 (NISVVNIPNE…IRREIAKKTL (61 aa)). The HD domain occupies 343 to 436 (VLKHSLEVAF…VAIADTLSSA (94 aa)).

This sequence belongs to the RNase Y family.

The protein resides in the cell membrane. Functionally, endoribonuclease that initiates mRNA decay. This is Ribonuclease Y from Onion yellows phytoplasma (strain OY-M).